We begin with the raw amino-acid sequence, 320 residues long: Phosphate acyltransferase (320 aa).

This sequence belongs to the PlsX family. In terms of assembly, homodimer. Probably interacts with PlsY.

It is found in the cytoplasm. The enzyme catalyses a fatty acyl-[ACP] + phosphate = an acyl phosphate + holo-[ACP]. It participates in lipid metabolism; phospholipid metabolism. Functionally, catalyzes the reversible formation of acyl-phosphate (acyl-PO(4)) from acyl-[acyl-carrier-protein] (acyl-ACP). This enzyme utilizes acyl-ACP as fatty acyl donor, but not acyl-CoA. In Chlamydia pneumoniae (Chlamydophila pneumoniae), this protein is Phosphate acyltransferase.